The sequence spans 1363 residues: Homeobox protein 13 (1363 aa).

Residues 15–73 (FVMEQIQQQQQQQQQQQQQQQQQQQQQQQQQQQQLQQQQQQQQQQQQQQQQQQQQQQQN) are a coiled coil. Disordered regions lie at residues 66–96 (QQQQQQQNPKMNNQPNETRLPSPPLLNSTVP), 120–177 (SQHA…INGS), 308–437 (INGT…YHGG), 621–731 (LNSP…QHQQ), 765–818 (HHHH…PQHS), 857–911 (SINS…SNSI), 1001–1137 (QNYN…TLIN), 1166–1202 (NFINNNSNNNNNMEIDDDDEDGIDGIEGEDDSKKRMR), and 1270–1341 (ISFG…TLIS). Residues 73–96 (NPKMNNQPNETRLPSPPLLNSTVP) are compositionally biased toward polar residues. Low complexity predominate over residues 132–147 (SLNSSNNNNNNNFNNS). Residues 148–158 (RPTFSSCSGNS) show a composition bias toward polar residues. Low complexity-rich tracts occupy residues 159-177 (NNTTTTTTTTTTTNPINGS) and 315-326 (SNHSNNNNNNNN). Residues 327–339 (NHHHHHHHHHQKR) show a composition bias toward basic residues. Residues 348 to 378 (TNHLTPLPLLHKHTNNNNNINNNNNHNHNNI) show a composition bias toward low complexity. Residues 379 to 393 (LGSPNQLNRSQDFTS) show a composition bias toward polar residues. Composition is skewed to low complexity over residues 394–408 (KNNNINNNNNNNNKI), 415–426 (NKGSPNQNSSEN), 641–693 (NNNS…NNNI), 709–731 (HHQQQLQHQQHQQQQLLHQQHQQ), and 770–793 (QQQQQQQQQQQHNNNNNNNNSNHN). Residues 738-789 (QQQLQIQYQQQQTHNNNLNQTQQLYYNHHHHQQQQQQQQQQQQHNNNNNNNN) adopt a coiled-coil conformation. Polar residues-rich tracts occupy residues 794-818 (SVLTSPPLSQFPKTPLQLSQTPQHS) and 857-883 (SINSNSGMSLPMISSPSPNLSHMQKNR). Low complexity-rich tracts occupy residues 889–911 (ILNSSLSSSNTTNSATTSSSNSI), 1001–1031 (QNYNENNNNNNNNNNNNYNINNINNNNNNNF), and 1045–1063 (NINNNNNNNNNNNNNNNNN). The segment covering 1064–1078 (KNDKNESEFESKEKL) has biased composition (basic and acidic residues). The span at 1081-1095 (PFGSSIPNIVNNEQL) shows a compositional bias: polar residues. Composition is skewed to low complexity over residues 1096–1116 (SPYSQQSLSSSSSENPSPQWS), 1123–1137 (TSSSKLSNSTSTLIN), and 1166–1177 (NFINNNSNNNNN). Over residues 1179 to 1195 (EIDDDDEDGIDGIEGED) the composition is skewed to acidic residues. Residues 1198-1261 (KKRMRKTTRP…NRRTKDKLKN (64 aa)) constitute a DNA-binding region (homeobox). A compositionally biased stretch (low complexity) spans 1275–1294 (SSTSSTQTSTNSPSSQLSPL). Residues 1297 to 1316 (NMNNNDQQSISTPSLILSQI) show a composition bias toward polar residues. A compositionally biased stretch (low complexity) spans 1317–1334 (NNNQNNNQNNNNNNNTNN).

The protein resides in the nucleus. Its function is as follows. Putative transcription factor. The protein is Homeobox protein 13 (hbx13) of Dictyostelium discoideum (Social amoeba).